The chain runs to 1154 residues: Polyketide biosynthesis protein ThaF (1154 aa).

An acyl transferase region spans residues 330 to 714 (MHAFLFPGQG…TNGIAPAARV (385 aa)). Positions 627–689 (SAVAASAPPR…PAPAPAPAPA (63 aa)) are disordered. Over residues 641–672 (ADAQPPAASPARAATAASTMPPASASASASAP) the composition is skewed to low complexity. Residues 673–689 (APAPAPAPAPAPAPAPA) show a composition bias toward pro residues.

In the N-terminal section; belongs to the FabD family.

It is found in the cytoplasm. The catalysed reaction is holo-[ACP] + malonyl-CoA = malonyl-[ACP] + CoA. The protein operates within antibiotic biosynthesis. Functionally, involved in production of the polyketide antibiotic thailandamide. Probably has an acyl transferase activity and could also have a flavin mononucleotide-dependent oxidoreductase activity. The chain is Polyketide biosynthesis protein ThaF from Burkholderia thailandensis (strain ATCC 700388 / DSM 13276 / CCUG 48851 / CIP 106301 / E264).